A 236-amino-acid polypeptide reads, in one-letter code: Sperm flagellar protein 1 (236 aa).

In terms of domain architecture, Calponin-homology (CH) spans 7 to 112; that stretch reads EEALHQLYLW…VLIPLRQRLE (106 aa). A disordered region spans residues 115–176; that stretch reads QRRRKQGAGS…PRPPAYNRAL (62 aa). An essential for homodimerization and microtubule bundling activity region spans residues 183-236; it reads VLQIAEKEQELLASQETVQVLQMKVRRLEHLLQLKNVRIEDLSRRLQQAERKQR.

Homodimer. Interacts with actin, TJP1, CGN and CDH1. Expressed in the intestinal epithelial cells (at protein level).

It localises to the cytoplasm. The protein resides in the cell projection. Its subcellular location is the cilium. The protein localises to the flagellum. It is found in the cytoskeleton. It localises to the cilium axoneme. The protein resides in the apical cell membrane. Its subcellular location is the basolateral cell membrane. The protein localises to the stress fiber. It is found in the microvillus. It localises to the lamellipodium. The protein resides in the filopodium. Functionally, microtubule-associated protein involved in the stabilization of microtubules along the axis of migration during radial intercalation. Promotes the establishment and stabilization of an axis of microtubules required for the active migration of cells into the outer epithelium. Microtubule-associated protein that promotes microtubule bundling and stabilizes microtubules against depolymerization in response to cold shock. Essential for ciliary central apparatus formation which requires both its microtubule-binding and bundling activities and for ciliary localization of HYDIN and SPAG6 in ependymal cilia. Binds actin in intestinal epithelial cells (IECs), essential for IECs survival and contributes to formation of filopodia and lamellipodia in migrating IECs. Regulates planar cell polarity signaling pathway and asymmetric microtubule accumulation in ciliated epithelia. In Homo sapiens (Human), this protein is Sperm flagellar protein 1 (SPEF1).